Here is a 316-residue protein sequence, read N- to C-terminus: 4-hydroxy-3-methylbut-2-enyl diphosphate reductase (316 aa).

[4Fe-4S] cluster is bound at residue cysteine 12. The (2E)-4-hydroxy-3-methylbut-2-enyl diphosphate site is built by histidine 41 and histidine 74. Residues histidine 41 and histidine 74 each coordinate dimethylallyl diphosphate. Isopentenyl diphosphate-binding residues include histidine 41 and histidine 74. Cysteine 96 is a [4Fe-4S] cluster binding site. Residue histidine 124 coordinates (2E)-4-hydroxy-3-methylbut-2-enyl diphosphate. Histidine 124 contacts dimethylallyl diphosphate. Isopentenyl diphosphate is bound at residue histidine 124. The Proton donor role is filled by glutamate 126. Residue threonine 167 coordinates (2E)-4-hydroxy-3-methylbut-2-enyl diphosphate. Cysteine 197 contributes to the [4Fe-4S] cluster binding site. Residues serine 225, serine 226, asparagine 227, and serine 269 each contribute to the (2E)-4-hydroxy-3-methylbut-2-enyl diphosphate site. Dimethylallyl diphosphate is bound by residues serine 225, serine 226, asparagine 227, and serine 269. Residues serine 225, serine 226, asparagine 227, and serine 269 each coordinate isopentenyl diphosphate.

The protein belongs to the IspH family. Homodimer. It depends on [4Fe-4S] cluster as a cofactor.

It carries out the reaction isopentenyl diphosphate + 2 oxidized [2Fe-2S]-[ferredoxin] + H2O = (2E)-4-hydroxy-3-methylbut-2-enyl diphosphate + 2 reduced [2Fe-2S]-[ferredoxin] + 2 H(+). It catalyses the reaction dimethylallyl diphosphate + 2 oxidized [2Fe-2S]-[ferredoxin] + H2O = (2E)-4-hydroxy-3-methylbut-2-enyl diphosphate + 2 reduced [2Fe-2S]-[ferredoxin] + 2 H(+). The protein operates within isoprenoid biosynthesis; dimethylallyl diphosphate biosynthesis; dimethylallyl diphosphate from (2E)-4-hydroxy-3-methylbutenyl diphosphate: step 1/1. It participates in isoprenoid biosynthesis; isopentenyl diphosphate biosynthesis via DXP pathway; isopentenyl diphosphate from 1-deoxy-D-xylulose 5-phosphate: step 6/6. Its function is as follows. Catalyzes the conversion of 1-hydroxy-2-methyl-2-(E)-butenyl 4-diphosphate (HMBPP) into a mixture of isopentenyl diphosphate (IPP) and dimethylallyl diphosphate (DMAPP). Acts in the terminal step of the DOXP/MEP pathway for isoprenoid precursor biosynthesis. This is 4-hydroxy-3-methylbut-2-enyl diphosphate reductase from Klebsiella pneumoniae (strain 342).